Reading from the N-terminus, the 239-residue chain is UDP-2,3-diacylglucosamine hydrolase (239 aa).

Mn(2+) is bound by residues Asp8, His10, Asp41, Asn78, and His113. Asn78 to Arg79 is a binding site for substrate. Residues Asp121, Ser159, Asn163, Lys166, and His194 each contribute to the substrate site. His194 and His196 together coordinate Mn(2+).

Belongs to the LpxH family. It depends on Mn(2+) as a cofactor.

The protein resides in the cell inner membrane. The catalysed reaction is UDP-2-N,3-O-bis[(3R)-3-hydroxytetradecanoyl]-alpha-D-glucosamine + H2O = 2-N,3-O-bis[(3R)-3-hydroxytetradecanoyl]-alpha-D-glucosaminyl 1-phosphate + UMP + 2 H(+). It participates in glycolipid biosynthesis; lipid IV(A) biosynthesis; lipid IV(A) from (3R)-3-hydroxytetradecanoyl-[acyl-carrier-protein] and UDP-N-acetyl-alpha-D-glucosamine: step 4/6. In terms of biological role, hydrolyzes the pyrophosphate bond of UDP-2,3-diacylglucosamine to yield 2,3-diacylglucosamine 1-phosphate (lipid X) and UMP by catalyzing the attack of water at the alpha-P atom. Involved in the biosynthesis of lipid A, a phosphorylated glycolipid that anchors the lipopolysaccharide to the outer membrane of the cell. The sequence is that of UDP-2,3-diacylglucosamine hydrolase from Shewanella sp. (strain ANA-3).